Reading from the N-terminus, the 329-residue chain is Malate dehydrogenase (329 aa).

NAD(+) is bound at residue G12–G18. Substrate is bound by residues R93 and R99. NAD(+) contacts are provided by residues N106, Q113, and V130–N132. Positions 132 and 163 each coordinate substrate. H188 serves as the catalytic Proton acceptor.

Belongs to the LDH/MDH superfamily. MDH type 2 family.

The catalysed reaction is (S)-malate + NAD(+) = oxaloacetate + NADH + H(+). Strongly inhibited by Hg(2+) and Zn(2+). Activated by Na(+), NH(4)(+), Ca(2+), Cu(2+) and Mg(2+). Catalyzes the reversible oxidation of malate to oxaloacetate. Exhibits remarkably higher catalytic efficiency for oxaloacetate reduction than for malate oxidation in vitro. Highly specific for NAD(H). Can also use NADPH for oxaloacetate reduction, but catalytic efficiency is 97-fold higher with NADH. No activity detected with NADP(+) and malate. The chain is Malate dehydrogenase from Streptomyces avermitilis (strain ATCC 31267 / DSM 46492 / JCM 5070 / NBRC 14893 / NCIMB 12804 / NRRL 8165 / MA-4680).